The following is a 204-amino-acid chain: MSAMRLFALTSAMLPLAFILSTSPFPATAAEKNVIVEQRNASSSPKQRLDQLFSQLKRERDPDKASSIANEIRLEWNDSGSATINLLMQWADKAIEEKRNPAALDFLDEAIALKPDYAESWNRRATLNFVMGNYRKSMSDIEHVLNIEPRHFGALSGMAAILSNSGNDQLTLKAWERFLDIYPADRTAQEQVNMLAEKLAGNRT.

An N-terminal signal peptide occupies residues 1–29 (MSAMRLFALTSAMLPLAFILSTSPFPATA). 3 TPR repeats span residues 84–117 (INLL…KPDY), 118–151 (AESW…EPRH), and 153–185 (GALS…YPAD).

The chain is TPR repeat-containing protein RHE_CH03534.1 from Rhizobium etli (strain ATCC 51251 / DSM 11541 / JCM 21823 / NBRC 15573 / CFN 42).